We begin with the raw amino-acid sequence, 93 residues long: Small ribosomal subunit protein uS15 (93 aa).

This sequence belongs to the universal ribosomal protein uS15 family. In terms of assembly, part of the 30S ribosomal subunit. Forms a bridge to the 50S subunit in the 70S ribosome, contacting the 23S rRNA.

Its function is as follows. One of the primary rRNA binding proteins, it binds directly to 16S rRNA where it helps nucleate assembly of the platform of the 30S subunit by binding and bridging several RNA helices of the 16S rRNA. In terms of biological role, forms an intersubunit bridge (bridge B4) with the 23S rRNA of the 50S subunit in the ribosome. This chain is Small ribosomal subunit protein uS15, found in Ehrlichia ruminantium (strain Gardel).